A 758-amino-acid polypeptide reads, in one-letter code: Long-chain-alcohol oxidase FAO1 (758 aa).

2 consecutive transmembrane segments (helical) span residues 102-122 and 155-175; these read IVLRILTFRLGTLLLCGLVCL and PLARIGFMMIKAIFLFYYFTW. 246 to 261 provides a ligand contact to FAD; that stretch reads CDAVVVGSGCGGGVAA. His689 serves as the catalytic Proton acceptor.

Belongs to the GMC oxidoreductase family.

It localises to the membrane. It carries out the reaction a long-chain primary fatty alcohol + O2 = a long-chain fatty aldehyde + H2O2. Functionally, long-chain fatty alcohol oxidase involved in the omega-oxidation pathway of lipid degradation. The sequence is that of Long-chain-alcohol oxidase FAO1 (FAO1) from Arabidopsis thaliana (Mouse-ear cress).